The primary structure comprises 186 residues: UPF0157 protein SCO7215 (186 aa).

Belongs to the UPF0157 (GrpB) family.

The protein is UPF0157 protein SCO7215 of Streptomyces coelicolor (strain ATCC BAA-471 / A3(2) / M145).